We begin with the raw amino-acid sequence, 166 residues long: HTH-type transcriptional regulator PetP (166 aa).

The region spanning 17–152 (DEQLRKGIEA…FRQVLEAMMD (136 aa)) is the HTH marR-type domain. A DNA-binding region (H-T-H motif) is located at residues 66 to 89 (VTTLISVLGVTKQSLNRVLRTLID).

Functionally, necessary for photosynthetic and respiratory growth. The polypeptide is HTH-type transcriptional regulator PetP (petP) (Rhodobacter capsulatus (strain ATCC BAA-309 / NBRC 16581 / SB1003)).